Consider the following 431-residue polypeptide: Adenylosuccinate synthetase (431 aa).

GTP is bound by residues 13-19 and 41-43; these read GDEGKGK and GHT. D14 functions as the Proton acceptor in the catalytic mechanism. Mg(2+) contacts are provided by D14 and G41. Residues 14-17, 39-42, T130, R144, Q225, T240, and R304 contribute to the IMP site; these read DEGK and NAGH. H42 (proton donor) is an active-site residue. 300–306 contacts substrate; it reads ATTGRKR. GTP is bound by residues R306, 332–334, and 415–417; these read KLD and STG.

The protein belongs to the adenylosuccinate synthetase family. As to quaternary structure, homodimer. The cofactor is Mg(2+).

It is found in the cytoplasm. It carries out the reaction IMP + L-aspartate + GTP = N(6)-(1,2-dicarboxyethyl)-AMP + GDP + phosphate + 2 H(+). It participates in purine metabolism; AMP biosynthesis via de novo pathway; AMP from IMP: step 1/2. Functionally, plays an important role in the de novo pathway of purine nucleotide biosynthesis. Catalyzes the first committed step in the biosynthesis of AMP from IMP. The sequence is that of Adenylosuccinate synthetase from Shewanella woodyi (strain ATCC 51908 / MS32).